The sequence spans 96 residues: Small ribosomal subunit protein bS6 (96 aa).

Belongs to the bacterial ribosomal protein bS6 family.

Its function is as follows. Binds together with bS18 to 16S ribosomal RNA. The protein is Small ribosomal subunit protein bS6 of Gloeobacter violaceus (strain ATCC 29082 / PCC 7421).